The chain runs to 778 residues: uncharacterized protein (778 aa).

Composition is skewed to polar residues over residues 1–11, 18–34, and 41–51; these read MPISSPGTRCS, TLQQ…QSLG, and GSITENYVQDS. Residues 1 to 60 form a disordered region; the sequence is MPISSPGTRCSSDLKDPTLQQYSAESVSTEQSLGTFEESKGSITENYVQDSSVDEHDDGN. 2 consecutive transmembrane segments (helical) span residues 356–381 and 401–423; these read YILM…APII and GFLA…GAHI.

This sequence belongs to the TMCO4 family.

Its subcellular location is the golgi apparatus membrane. This is an uncharacterized protein from Schizosaccharomyces pombe (strain 972 / ATCC 24843) (Fission yeast).